Here is a 179-residue protein sequence, read N- to C-terminus: MLMGSIARRYARALFSLAVEQGRVEPWNDALQVLKNAVEGSPDLRDVLSNPVYSKEQRRAIVEKLASALKLEREPANLLFLLGDRNRLAYLPAVVDTFRALADQHLGRLRARVTSAVPLDAQAAQAIADRLSQATKATVLLDRAVDPALLGGVVAQVGSLVYDGSLRTQLEDLRKTLKQ.

It belongs to the ATPase delta chain family. In terms of assembly, F-type ATPases have 2 components, F(1) - the catalytic core - and F(0) - the membrane proton channel. F(1) has five subunits: alpha(3), beta(3), gamma(1), delta(1), epsilon(1). F(0) has three main subunits: a(1), b(2) and c(10-14). The alpha and beta chains form an alternating ring which encloses part of the gamma chain. F(1) is attached to F(0) by a central stalk formed by the gamma and epsilon chains, while a peripheral stalk is formed by the delta and b chains.

The protein resides in the cell inner membrane. F(1)F(0) ATP synthase produces ATP from ADP in the presence of a proton or sodium gradient. F-type ATPases consist of two structural domains, F(1) containing the extramembraneous catalytic core and F(0) containing the membrane proton channel, linked together by a central stalk and a peripheral stalk. During catalysis, ATP synthesis in the catalytic domain of F(1) is coupled via a rotary mechanism of the central stalk subunits to proton translocation. Functionally, this protein is part of the stalk that links CF(0) to CF(1). It either transmits conformational changes from CF(0) to CF(1) or is implicated in proton conduction. This is ATP synthase subunit delta from Anaeromyxobacter dehalogenans (strain 2CP-C).